Reading from the N-terminus, the 538-residue chain is Reticuline oxidase (538 aa).

Residues 1 to 23 (MENKTPIFFSLSIFLSLLNCALG) form the signal peptide. C30 and C89 are oxidised to a cystine. N38 carries an N-linked (GlcNAc...) asparagine glycan. The FAD-binding PCMH-type domain occupies 67 to 241 (LISKPSAIIL…YAWKIKLLPV (175 aa)). Positions 104-166 (HSYEGLSYTS…SKLGFTAGWC (63 aa)) form a cross-link, 6-(S-cysteinyl)-8alpha-(pros-histidyl)-FAD (His-Cys). Residues N423 and N471 are each glycosylated (N-linked (GlcNAc...) asparagine).

Belongs to the oxygen-dependent FAD-linked oxidoreductase family. FAD serves as cofactor. Requires a metal cation as cofactor. The FAD cofactor is bound via a bicovalent 6-S-cysteinyl, 8alpha-N1-histidyl FAD linkage.

Its subcellular location is the cytoplasmic vesicle. It catalyses the reaction (S)-reticuline + O2 = (S)-scoulerine + H2O2 + H(+). The protein operates within alkaloid biosynthesis; (S)-scoulerine biosynthesis; (S)-scoulerine from (S)-reticuline: step 1/1. In terms of biological role, essential to the formation of benzophenanthridine alkaloids in the response of plants to pathogenic attack. Catalyzes the stereospecific conversion of the N-methyl moiety of (S)-reticuline into the berberine bridge carbon of (S)-scoulerine. This chain is Reticuline oxidase (BBE1), found in Eschscholzia californica (California poppy).